A 1300-amino-acid polypeptide reads, in one-letter code: Zinc finger protein 536 (1300 aa).

Disordered stretches follow at residues 1 to 26 (MEEASLCLGVSSAEPEAEPHLSGPVL) and 47 to 77 (FPELHPRPNPEEKPPASLEEKAHVPMSGQPM). Basic and acidic residues predominate over residues 48–69 (PELHPRPNPEEKPPASLEEKAH). 6 consecutive C2H2-type zinc fingers follow at residues 130–152 (YPCPLCGKRFRFNSILSLHMRTH), 158–180 (FKCPYCDHRAAQKGNLKIHLRTH), 274–297 (FRCTFCKGKFKKREELDRHIRILH), 300–323 (YKCTLCDFAASQEEELISHVEKAH), 345–367 (FRCEVCGQVFSQAWFLKGHMRKH), and 373–395 (HCCQICGRRFKEPWFLKNHMKVH). 2 disordered regions span residues 584–604 (HSTKVGSQRDLPSKLDPLESS) and 650–739 (SRVH…QQPA). Basic and acidic residues predominate over residues 594 to 604 (LPSKLDPLESS). The segment at 631-653 (TECPDCGRVFRTYHQVVVHSRVH) adopts a C2H2-type 7 zinc-finger fold. Basic and acidic residues predominate over residues 657–674 (RKGEEDGLHVGLDERRGS). Polar residues predominate over residues 675 to 696 (GSDQESQSVSRSTTPGSSNVTE). 2 consecutive C2H2-type zinc fingers follow at residues 751–773 (KDCPYCGKTFRTSHHLKVHLRIH) and 779–801 (YKCPHCDYAGTQSASLKYHLERH). The tract at residues 802 to 826 (HRERQNGAGPLSGQPPNQDHKDEMS) is disordered. Serine 826 and serine 827 each carry phosphoserine. The span at 856-880 (SQQWTSGVLSSGDHSGQATGMSSEV) shows a compositional bias: polar residues. 3 disordered regions span residues 856–893 (SQQWTSGVLSSGDHSGQATGMSSEVPSDALKGTDLPSK), 937–985 (KDKA…PDAA), and 1124–1260 (SGAS…SLDK). Composition is skewed to basic and acidic residues over residues 950-972 (HGVDGGEEKPSGKSSQRKSEKSQ) and 1133-1143 (KEPDGKAHSEE). Acidic residues-rich tracts occupy residues 1160–1170 (DLSDIASSEDM) and 1178–1187 (NDEEDVETEP). Low complexity predominate over residues 1194–1209 (LSALSKDSSSDGGDSL).

Belongs to the krueppel C2H2-type zinc-finger protein family.

The protein localises to the nucleus. Functionally, transcriptional repressor that negatively regulates neuron differentiation by repressing retinoic acid-induced gene transcription. Binds and interrupts RARA from binding to retinoic acid response elements (RARE) composed of tandem 5'-AGGTCA-3' sites known as DR1-DR5. Recognizes and binds 2 copies of the core DNA sequence 5'-CCCCCA-3'. The chain is Zinc finger protein 536 (ZNF536) from Homo sapiens (Human).